The sequence spans 273 residues: Formamidopyrimidine-DNA glycosylase (273 aa).

The Schiff-base intermediate with DNA role is filled by proline 2. Glutamate 3 (proton donor) is an active-site residue. Lysine 57 functions as the Proton donor; for beta-elimination activity in the catalytic mechanism. The DNA site is built by histidine 91, arginine 110, and lysine 151. An FPG-type zinc finger spans residues glutamine 236–methionine 270. The Proton donor; for delta-elimination activity role is filled by arginine 260.

Belongs to the FPG family. As to quaternary structure, monomer. Zn(2+) is required as a cofactor.

The enzyme catalyses Hydrolysis of DNA containing ring-opened 7-methylguanine residues, releasing 2,6-diamino-4-hydroxy-5-(N-methyl)formamidopyrimidine.. It catalyses the reaction 2'-deoxyribonucleotide-(2'-deoxyribose 5'-phosphate)-2'-deoxyribonucleotide-DNA = a 3'-end 2'-deoxyribonucleotide-(2,3-dehydro-2,3-deoxyribose 5'-phosphate)-DNA + a 5'-end 5'-phospho-2'-deoxyribonucleoside-DNA + H(+). Functionally, involved in base excision repair of DNA damaged by oxidation or by mutagenic agents. Acts as a DNA glycosylase that recognizes and removes damaged bases. Has a preference for oxidized purines, such as 7,8-dihydro-8-oxoguanine (8-oxoG). Has AP (apurinic/apyrimidinic) lyase activity and introduces nicks in the DNA strand. Cleaves the DNA backbone by beta-delta elimination to generate a single-strand break at the site of the removed base with both 3'- and 5'-phosphates. This chain is Formamidopyrimidine-DNA glycosylase, found in Actinobacillus pleuropneumoniae serotype 3 (strain JL03).